The primary structure comprises 1342 residues: ATP-dependent RNA helicase TDRD9 (1342 aa).

Over residues 31–63 (KAEAEDNATEVRSDKAFSELSSPEKEKSDDGNQ) the composition is skewed to basic and acidic residues. Positions 31-81 (KAEAEDNATEVRSDKAFSELSSPEKEKSDDGNQRRKRAQLPTGPGTSPPSL) are disordered. The Helicase ATP-binding domain occupies 99 to 265 (VSLIENNSVV…FGSPIRNQMN (167 aa)). Residue 112-119 (GATGSGKT) coordinates ATP. The DEAH box signature appears at 211–214 (DEVH). Residues 317-503 (SLIQSFDEME…LLKVKLLDMG (187 aa)) form the Helicase C-terminal domain. In terms of domain architecture, Tudor spans 901–962 (SLYPNLLCVA…RELPSDLMTP (62 aa)).

It belongs to the DEAD box helicase family. DEAH subfamily.

Its subcellular location is the cytoplasm. It localises to the nucleus. The catalysed reaction is ATP + H2O = ADP + phosphate + H(+). ATP-binding RNA helicase which plays a central role during spermatogenesis by repressing transposable elements and preventing their mobilization, which is essential for the germline integrity. Acts via the piRNA metabolic process, which mediates the repression of transposable elements during meiosis by forming complexes composed of piRNAs and Piwi proteins and governs the methylation and subsequent repression of transposons. Acts downstream of piRNA biogenesis: exclusively required for transposon silencing in the nucleus, suggesting that it acts as a nuclear effector in the nucleus together with piwil4. The polypeptide is ATP-dependent RNA helicase TDRD9 (Danio rerio (Zebrafish)).